The primary structure comprises 92 residues: MKLCVTVLSLLMLVAAFCSPALSAPMGSDPPTACCFSYTARKLPRNFVVDYYETSSLCSQPAVVFQTKRSKQVCADPSESWVQEYVYDLELN.

A signal peptide spans 1–23; it reads MKLCVTVLSLLMLVAAFCSPALS. Cystine bridges form between cysteine 34-cysteine 58 and cysteine 35-cysteine 74.

Belongs to the intercrine beta (chemokine CC) family. In terms of assembly, homodimer and heterodimer of MIP-1-alpha(4-69) and MIP-1-beta(3-69). Post-translationally, N-terminal processed form MIP-1-beta(3-69) is produced by proteolytic cleavage after secretion from peripheral blood lymphocytes.

It is found in the secreted. Functionally, monokine with inflammatory and chemokinetic properties. Binds to CCR5. One of the major HIV-suppressive factors produced by CD8+ T-cells. Recombinant MIP-1-beta induces a dose-dependent inhibition of different strains of HIV-1, HIV-2, and simian immunodeficiency virus (SIV). The processed form MIP-1-beta(3-69) retains the abilities to induce down-modulation of surface expression of the chemokine receptor CCR5 and to inhibit the CCR5-mediated entry of HIV-1 in T-cells. MIP-1-beta(3-69) is also a ligand for CCR1 and CCR2 isoform B. The polypeptide is C-C motif chemokine 4 (CCL4) (Homo sapiens (Human)).